The primary structure comprises 538 residues: Phosphoenolpyruvate carboxykinase (ATP) (538 aa).

3 residues coordinate substrate: Arg-64, Tyr-205, and Lys-211. Residues Lys-211, His-230, and Gly-246–Thr-254 each bind ATP. Residues Lys-211 and His-230 each contribute to the Mn(2+) site. Asp-267 is a Mn(2+) binding site. Residues Glu-295, Arg-331, Arg-447 to Ile-448, and Thr-453 each bind ATP. Substrate is bound at residue Arg-331.

This sequence belongs to the phosphoenolpyruvate carboxykinase (ATP) family. As to quaternary structure, monomer. It depends on Mn(2+) as a cofactor.

The protein resides in the cytoplasm. The catalysed reaction is oxaloacetate + ATP = phosphoenolpyruvate + ADP + CO2. The protein operates within carbohydrate biosynthesis; gluconeogenesis. Its function is as follows. Involved in the gluconeogenesis. Catalyzes the conversion of oxaloacetate (OAA) to phosphoenolpyruvate (PEP) through direct phosphoryl transfer between the nucleoside triphosphate and OAA. In Baumannia cicadellinicola subsp. Homalodisca coagulata, this protein is Phosphoenolpyruvate carboxykinase (ATP).